Reading from the N-terminus, the 66-residue chain is Large ribosomal subunit protein bL33c (66 aa).

It belongs to the bacterial ribosomal protein bL33 family.

The protein resides in the plastid. It localises to the chloroplast. This Cryptomeria japonica (Japanese cedar) protein is Large ribosomal subunit protein bL33c.